A 425-amino-acid chain; its full sequence is Histidine--tRNA ligase 1 (425 aa).

Belongs to the class-II aminoacyl-tRNA synthetase family. Homodimer.

It is found in the cytoplasm. The catalysed reaction is tRNA(His) + L-histidine + ATP = L-histidyl-tRNA(His) + AMP + diphosphate + H(+). The sequence is that of Histidine--tRNA ligase 1 from Bacillus thuringiensis subsp. konkukian (strain 97-27).